The following is a 261-amino-acid chain: Acidic leucine-rich nuclear phosphoprotein 32 family member B (261 aa).

LRR repeat units lie at residues 16–40 (PAAV…LTAE), 43–64 (NLEF…PKLP), 65–87 (KLKK…AEKL), and 89–110 (NLTH…EPLK). Lys-86 is modified (N6-acetyllysine). An LRRCT domain is found at 123–161 (CEVTNLNDYRESVFKLLPQLTYLDGYDREDREAPDSDAE). The interval 149 to 261 (DREDREAPDS…RETDDEGEDD (113 aa)) is disordered. Over residues 157 to 243 (DSDAEVDGVD…DEDEDEEEEE (87 aa)) the composition is skewed to acidic residues. At Ser-158 the chain carries Phosphoserine. The span at 244 to 254 (SGKGEKRKRET) shows a compositional bias: basic and acidic residues. The Nuclear localization signal motif lies at 249–252 (KRKR). Phosphothreonine is present on Thr-254.

Belongs to the ANP32 family. In terms of assembly, interacts with histones H3 and H4. Interacts with KLF5; this interaction induces promoter region-specific histone incorporation and inhibition of histone acetylation by ANP32B. Post-translationally, some Glu residues are glycylated by TTLL8; a modification that generates a side chains of glycine on the gamma-carboxyl groups of specific glutamate residues. In terms of processing, directly cleaved by caspase-3/CASP3.

The protein resides in the nucleus. Multifunctional protein that is involved in the regulation of many processes including cell proliferation, apoptosis, cell cycle progression or transcription. Regulates the proliferation of neuronal stem cells, differentiation of leukemic cells and progression from G1 to S phase of the cell cycle. As negative regulator of caspase-3-dependent apoptosis, may act as an antagonist of ANP32A in regulating tissue homeostasis. Exhibits histone chaperone properties, able to recruit histones to certain promoters, thus regulating the transcription of specific genes. Also plays an essential role in the nucleocytoplasmic transport of specific mRNAs via the uncommon nuclear mRNA export receptor XPO1/CRM1. Participates in the regulation of adequate adaptive immune responses by acting on mRNA expression and cell proliferation. The protein is Acidic leucine-rich nuclear phosphoprotein 32 family member B (ANP32B) of Bos taurus (Bovine).